We begin with the raw amino-acid sequence, 108 residues long: Large ribosomal subunit protein uL24 (108 aa).

Belongs to the universal ribosomal protein uL24 family. As to quaternary structure, part of the 50S ribosomal subunit.

One of two assembly initiator proteins, it binds directly to the 5'-end of the 23S rRNA, where it nucleates assembly of the 50S subunit. Functionally, one of the proteins that surrounds the polypeptide exit tunnel on the outside of the subunit. This chain is Large ribosomal subunit protein uL24, found in Citrifermentans bemidjiense (strain ATCC BAA-1014 / DSM 16622 / JCM 12645 / Bem) (Geobacter bemidjiensis).